Consider the following 149-residue polypeptide: Transcriptional repressor NrdR (149 aa).

The segment at 3–34 is a zinc-finger region; sequence CPFCGTQDTKVIDSRLVADGASVRRRRECNHC. The region spanning 49 to 139 is the ATP-cone domain; it reads PRVIKTDGSR…VYRSFEDIRE (91 aa).

This sequence belongs to the NrdR family. Requires Zn(2+) as cofactor.

Its function is as follows. Negatively regulates transcription of bacterial ribonucleotide reductase nrd genes and operons by binding to NrdR-boxes. This Idiomarina loihiensis (strain ATCC BAA-735 / DSM 15497 / L2-TR) protein is Transcriptional repressor NrdR.